The chain runs to 297 residues: Mitochondrial nicotinamide adenine dinucleotide transporter SLC25A51 (297 aa).

The segment covering 1–11 has biased composition (basic and acidic residues); sequence MMDSEAHEKRP. Positions 1 to 20 are disordered; it reads MMDSEAHEKRPPILTSSKQD. Solcar repeat units lie at residues 28 to 108, 116 to 200, and 213 to 296; these read VGEM…LSCL, PEFA…IKEH, and NDFI…LLKV. Helical transmembrane passes span 36–56, 85–105, 116–135, 179–199, 215–235, and 268–289; these read CGCC…KVLF, LPPL…YEDL, PEFA…EAIF, ILFR…PIKE, FICG…INVV, and LFRG…INAT.

The protein belongs to the mitochondrial carrier (TC 2.A.29) family.

Its subcellular location is the mitochondrion inner membrane. The catalysed reaction is NAD(+)(in) = NAD(+)(out). Mitochondrial membrane carrier protein that mediates the import of NAD(+) into mitochondria. Mitochondrial NAD(+) is required for glycolysis and mitochondrial respiration. Compared to SLC25A52, SLC25A51-mediated transport is essential for the import of NAD(+) in mitochondria. The transport mechanism, uniport or antiport, its electrogenicity and substrate selectivity, remain to be elucidated. This is Mitochondrial nicotinamide adenine dinucleotide transporter SLC25A51 from Homo sapiens (Human).